A 493-amino-acid chain; its full sequence is Galactose-1-phosphate uridylyltransferase (493 aa).

It belongs to the galactose-1-phosphate uridylyltransferase type 2 family.

It localises to the cytoplasm. It carries out the reaction alpha-D-galactose 1-phosphate + UDP-alpha-D-glucose = alpha-D-glucose 1-phosphate + UDP-alpha-D-galactose. Its pathway is carbohydrate metabolism; galactose metabolism. The polypeptide is Galactose-1-phosphate uridylyltransferase (Streptococcus pneumoniae (strain Hungary19A-6)).